The sequence spans 298 residues: MTLHLGSHVSMNGKKMLLGSSEEAISYGANTFMVYTGAPQNTRRKPIEELNIEAGRAHMKENGIDHIIVHAPYIINIGNSEKPATFKLGVDFLQSEIERTQALGADQIVLHPGAHVGAGVDKGIEKIIEGLNEVLTENDGVQIALETMAGKGSECGRTFEEIARIINGVTHNDRLSVCFDTCHTHDAGYNIVEDFDGVLNEFDKIIGVERIKVLHINDSKNPRGAAKDRHENIGFGHIGFKALHYIVHHPQLQDIPKILETPYVGEDKKNKKPPYKFEIDMIRNGTFHEGLLEKIVAQ.

Positions 70, 111, 146, 180, 183, 215, 228, 230, and 260 each coordinate Zn(2+).

The protein belongs to the AP endonuclease 2 family. Zn(2+) serves as cofactor.

It catalyses the reaction Endonucleolytic cleavage to 5'-phosphooligonucleotide end-products.. In terms of biological role, endonuclease IV plays a role in DNA repair. It cleaves phosphodiester bonds at apurinic or apyrimidinic (AP) sites, generating a 3'-hydroxyl group and a 5'-terminal sugar phosphate. The polypeptide is Probable endonuclease 4 (Halalkalibacterium halodurans (strain ATCC BAA-125 / DSM 18197 / FERM 7344 / JCM 9153 / C-125) (Bacillus halodurans)).